A 721-amino-acid polypeptide reads, in one-letter code: Polyribonucleotide nucleotidyltransferase (721 aa).

Residues D495 and D501 each contribute to the Mg(2+) site. A KH domain is found at 562–621 (PRLLSFRIDPELIGTVIGPGGRTIKNITERTNTKIDIEDSGIVTIASHDGAAAEEAQKII). One can recognise an S1 motif domain in the interval 631–699 (GEVFTGSITR…NRGRINLTLR (69 aa)). The tract at residues 700–721 (GVPQSGESADSQPAPTPVAPLS) is disordered.

The protein belongs to the polyribonucleotide nucleotidyltransferase family. Requires Mg(2+) as cofactor.

It localises to the cytoplasm. The catalysed reaction is RNA(n+1) + phosphate = RNA(n) + a ribonucleoside 5'-diphosphate. Functionally, involved in mRNA degradation. Catalyzes the phosphorolysis of single-stranded polyribonucleotides processively in the 3'- to 5'-direction. The sequence is that of Polyribonucleotide nucleotidyltransferase from Synechococcus sp. (strain CC9311).